A 144-amino-acid chain; its full sequence is uncharacterized protein (144 aa).

Residues 98–127 (PLADGATVDSQASENGEKEAQPTPPKEGLL) are disordered.

This is an uncharacterized protein from Aedes vexans (Inland floodwater mosquito).